We begin with the raw amino-acid sequence, 130 residues long: Small ribosomal subunit protein uS9 (130 aa).

It belongs to the universal ribosomal protein uS9 family.

The chain is Small ribosomal subunit protein uS9 from Geotalea daltonii (strain DSM 22248 / JCM 15807 / FRC-32) (Geobacter daltonii).